A 127-amino-acid polypeptide reads, in one-letter code: Large ribosomal subunit protein bL20 (127 aa).

This sequence belongs to the bacterial ribosomal protein bL20 family.

In terms of biological role, binds directly to 23S ribosomal RNA and is necessary for the in vitro assembly process of the 50S ribosomal subunit. It is not involved in the protein synthesizing functions of that subunit. The sequence is that of Large ribosomal subunit protein bL20 (rplT) from Mycoplasma pneumoniae (strain ATCC 29342 / M129 / Subtype 1) (Mycoplasmoides pneumoniae).